Consider the following 335-residue polypeptide: NAC domain-containing protein 60 (335 aa).

The NAC domain occupies 14 to 156; the sequence is TFPGFKFSPT…ALVICRLRRN (143 aa). Residues 112 to 162 mediate DNA binding; sequence IGTKRTLVFHIGRAPKGGRTEWLMHEYCMIGVSLDALVICRLRRNTEFQGS. The helical transmembrane segment at 315 to 335 threads the bilayer; the sequence is ARWDVVVWLLVMIAVLVFYLV.

Expressed in roots, rosette leaves, cauline leaves, shoot apex, stems and flowers.

The protein localises to the membrane. Its subcellular location is the nucleus. Its function is as follows. Transcriptional activator activated by proteolytic cleavage through regulated intramembrane proteolysis (RIP). Transcription factor involved in modulation of abscisic acid (ABA) signaling. Attenuates ABA sensitivity and glucose-induced ABA accumulation. Reduces the expression of ABI4 gene. The protein is NAC domain-containing protein 60 of Arabidopsis thaliana (Mouse-ear cress).